Here is a 159-residue protein sequence, read N- to C-terminus: RNA pyrophosphohydrolase (159 aa).

Residues 6 to 149 (GFRPNVGIIL…KREVYRRALK (144 aa)) enclose the Nudix hydrolase domain. A Nudix box motif is present at residues 38-59 (GGINARETPEEALFRELNEEVG).

Belongs to the Nudix hydrolase family. RppH subfamily. It depends on a divalent metal cation as a cofactor.

Functionally, accelerates the degradation of transcripts by removing pyrophosphate from the 5'-end of triphosphorylated RNA, leading to a more labile monophosphorylated state that can stimulate subsequent ribonuclease cleavage. This is RNA pyrophosphohydrolase from Stutzerimonas stutzeri (strain A1501) (Pseudomonas stutzeri).